A 511-amino-acid polypeptide reads, in one-letter code: Histidine ammonia-lyase (511 aa).

Residues 142–144 (ASG) constitute a cross-link (5-imidazolinone (Ala-Gly)). 2,3-didehydroalanine (Ser) is present on Ser-143.

The protein belongs to the PAL/histidase family. Post-translationally, contains an active site 4-methylidene-imidazol-5-one (MIO), which is formed autocatalytically by cyclization and dehydration of residues Ala-Ser-Gly.

The protein resides in the cytoplasm. It carries out the reaction L-histidine = trans-urocanate + NH4(+). It functions in the pathway amino-acid degradation; L-histidine degradation into L-glutamate; N-formimidoyl-L-glutamate from L-histidine: step 1/3. The polypeptide is Histidine ammonia-lyase (Brucella suis (strain ATCC 23445 / NCTC 10510)).